The sequence spans 30 residues: Cyclotide mden-G (30 aa).

The cyclopeptide (Gly-Asn) cross-link spans 1–30 (GIPCAESCVYIPCITAALGCSCKNKVCYRN). Cystine bridges form between Cys-4–Cys-20, Cys-8–Cys-22, and Cys-13–Cys-27.

It belongs to the cyclotide family. Bracelet subfamily. Post-translationally, this is a cyclic peptide.

Its function is as follows. Probably participates in a plant defense mechanism. This Melicytus dentatus (Tree violet) protein is Cyclotide mden-G.